An 811-amino-acid polypeptide reads, in one-letter code: Leucine--tRNA ligase (811 aa).

Positions 40–50 (PYPSGRLHMGH) match the 'HIGH' region motif. Positions 579 to 583 (KMSKS) match the 'KMSKS' region motif. An ATP-binding site is contributed by Lys582.

Belongs to the class-I aminoacyl-tRNA synthetase family.

The protein localises to the cytoplasm. The enzyme catalyses tRNA(Leu) + L-leucine + ATP = L-leucyl-tRNA(Leu) + AMP + diphosphate. The chain is Leucine--tRNA ligase from Campylobacter fetus subsp. fetus (strain 82-40).